Reading from the N-terminus, the 240-residue chain is MAGHSHSANIAHRKNAQDAARGKIFQKLSKEIFVAAQKGFDPEMNSALKLAISKAKAKNMPKDNIERAISKAKGDKNSNSFTETIFNATLSGGVSFIVTTLSDNLNRTRSNMTALFNKQNASLGKTGQIPFVFDHKGIIEFSKGELSEDDLMMVALENGAQEIETTDETFVLISNPEDFSQLKKALEDSFKIEEFLQCEILYLPNTYAEVSEEKQQKLLEFIDKLKDDDDVQDVYHNLDI.

It belongs to the TACO1 family.

It is found in the cytoplasm. This is Probable transcriptional regulatory protein MS53_0373 from Mycoplasmopsis synoviae (strain 53) (Mycoplasma synoviae).